Consider the following 294-residue polypeptide: N-acetylmuramic acid 6-phosphate etherase (294 aa).

In terms of domain architecture, SIS spans 54–217 (VIKSFEEEGR…STASMIGVGK (164 aa)). Glutamate 82 functions as the Proton donor in the catalytic mechanism. Glutamate 113 is an active-site residue.

The protein belongs to the GCKR-like family. MurNAc-6-P etherase subfamily. As to quaternary structure, homodimer.

The enzyme catalyses N-acetyl-D-muramate 6-phosphate + H2O = N-acetyl-D-glucosamine 6-phosphate + (R)-lactate. Its pathway is amino-sugar metabolism; N-acetylmuramate degradation. Specifically catalyzes the cleavage of the D-lactyl ether substituent of MurNAc 6-phosphate, producing GlcNAc 6-phosphate and D-lactate. This is N-acetylmuramic acid 6-phosphate etherase from Bacillus cereus (strain B4264).